The sequence spans 617 residues: UvrABC system protein C (617 aa).

One can recognise a GIY-YIG domain in the interval 22 to 100 (KLPGVYRFFD…IKALSPKYNI (79 aa)). Positions 209-244 (DELTRTLQHKMQTAAANLQFEEAARYRDQIQALGIM) constitute a UVR domain.

It belongs to the UvrC family. In terms of assembly, interacts with UvrB in an incision complex.

The protein localises to the cytoplasm. The UvrABC repair system catalyzes the recognition and processing of DNA lesions. UvrC both incises the 5' and 3' sides of the lesion. The N-terminal half is responsible for the 3' incision and the C-terminal half is responsible for the 5' incision. The sequence is that of UvrABC system protein C from Neisseria meningitidis serogroup A / serotype 4A (strain DSM 15465 / Z2491).